The following is a 381-amino-acid chain: L-lactate dehydrogenase (381 aa).

Residues 1–380 (MIISASTDYR…SADSLVRELG (380 aa)) form the FMN hydroxy acid dehydrogenase domain. Tyrosine 24 is a binding site for substrate. FMN is bound by residues serine 106 and glutamine 127. Tyrosine 129 is a substrate binding site. Threonine 155 is an FMN binding site. Residue arginine 164 coordinates substrate. Lysine 251 contributes to the FMN binding site. Histidine 275 (proton acceptor) is an active-site residue. Arginine 278 is a binding site for substrate. Residue 306–330 (DSGIRTGLDVVRMIALGADSVLLGR) coordinates FMN.

Belongs to the FMN-dependent alpha-hydroxy acid dehydrogenase family. In terms of assembly, homotetramer. FMN is required as a cofactor.

It localises to the cell inner membrane. The enzyme catalyses (S)-lactate + A = pyruvate + AH2. Its function is as follows. Catalyzes the conversion of L-lactate to pyruvate. Is coupled to the respiratory chain. This Pseudomonas aeruginosa (strain LESB58) protein is L-lactate dehydrogenase.